The primary structure comprises 277 residues: Undecaprenyl-diphosphatase (277 aa).

7 helical membrane-spanning segments follow: residues 1 to 21 (MTWI…FLPI), 41 to 61 (GAAF…IYFW), 90 to 110 (WLII…EDWI), 114 to 134 (FRSL…LALA), 191 to 211 (AFLL…YTSL), 224 to 244 (ETLV…AWLM), and 255 to 275 (FVWY…AGVI).

Belongs to the UppP family.

It is found in the cell membrane. It catalyses the reaction di-trans,octa-cis-undecaprenyl diphosphate + H2O = di-trans,octa-cis-undecaprenyl phosphate + phosphate + H(+). Catalyzes the dephosphorylation of undecaprenyl diphosphate (UPP). Confers resistance to bacitracin. This chain is Undecaprenyl-diphosphatase, found in Micrococcus luteus (strain ATCC 4698 / DSM 20030 / JCM 1464 / CCM 169 / CCUG 5858 / IAM 1056 / NBRC 3333 / NCIMB 9278 / NCTC 2665 / VKM Ac-2230) (Micrococcus lysodeikticus).